Here is a 122-residue protein sequence, read N- to C-terminus: Small ribosomal subunit protein uS13 (122 aa).

The interval 95–122 is disordered; it reads GLPVRGQRTHTNARTRKGPRRGTVGKKK.

It belongs to the universal ribosomal protein uS13 family. Part of the 30S ribosomal subunit. Forms a loose heterodimer with protein S19. Forms two bridges to the 50S subunit in the 70S ribosome.

Its function is as follows. Located at the top of the head of the 30S subunit, it contacts several helices of the 16S rRNA. In the 70S ribosome it contacts the 23S rRNA (bridge B1a) and protein L5 of the 50S subunit (bridge B1b), connecting the 2 subunits; these bridges are implicated in subunit movement. Contacts the tRNAs in the A and P-sites. The chain is Small ribosomal subunit protein uS13 from Nitratidesulfovibrio vulgaris (strain ATCC 29579 / DSM 644 / CCUG 34227 / NCIMB 8303 / VKM B-1760 / Hildenborough) (Desulfovibrio vulgaris).